A 193-amino-acid polypeptide reads, in one-letter code: Putative 3-methyladenine DNA glycosylase (193 aa).

The protein belongs to the DNA glycosylase MPG family.

The sequence is that of Putative 3-methyladenine DNA glycosylase from Francisella tularensis subsp. holarctica (strain FTNF002-00 / FTA).